Reading from the N-terminus, the 474-residue chain is Cysteine--tRNA ligase (474 aa).

Cysteine 27 provides a ligand contact to Zn(2+). The 'HIGH' region signature appears at proline 29–asparagine 39. Zn(2+) contacts are provided by cysteine 212, histidine 237, and glutamate 241. A 'KMSKS' region motif is present at residues lysine 271–serine 275. Lysine 274 serves as a coordination point for ATP.

Belongs to the class-I aminoacyl-tRNA synthetase family. As to quaternary structure, monomer. Zn(2+) is required as a cofactor.

It localises to the cytoplasm. The catalysed reaction is tRNA(Cys) + L-cysteine + ATP = L-cysteinyl-tRNA(Cys) + AMP + diphosphate. The protein is Cysteine--tRNA ligase of Lactobacillus delbrueckii subsp. bulgaricus (strain ATCC BAA-365 / Lb-18).